A 555-amino-acid chain; its full sequence is Glutamine--tRNA ligase (555 aa).

Positions 34–44 match the 'HIGH' region motif; it reads PEPNGYLHIGH. ATP contacts are provided by residues 35-37 and 41-47; these read EPN and HIGHAKS. L-glutamine contacts are provided by aspartate 67 and tyrosine 212. ATP-binding positions include threonine 231, 261–262, and 269–271; these read RL and MSK. Residues 268–272 carry the 'KMSKS' region motif; sequence VMSKR. The interval 317–324 is interaction with tRNA; sequence TKQDNTIE.

The protein belongs to the class-I aminoacyl-tRNA synthetase family. As to quaternary structure, monomer.

It localises to the cytoplasm. The enzyme catalyses tRNA(Gln) + L-glutamine + ATP = L-glutaminyl-tRNA(Gln) + AMP + diphosphate. This chain is Glutamine--tRNA ligase, found in Enterobacter sp. (strain 638).